The chain runs to 484 residues: Ribosomal RNA small subunit methyltransferase F (484 aa).

S-adenosyl-L-methionine-binding positions include A126–K132, E150, D177, and D195. C248 acts as the Nucleophile in catalysis.

It belongs to the class I-like SAM-binding methyltransferase superfamily. RsmB/NOP family.

It localises to the cytoplasm. It catalyses the reaction cytidine(1407) in 16S rRNA + S-adenosyl-L-methionine = 5-methylcytidine(1407) in 16S rRNA + S-adenosyl-L-homocysteine + H(+). Specifically methylates the cytosine at position 1407 (m5C1407) of 16S rRNA. The protein is Ribosomal RNA small subunit methyltransferase F of Pectobacterium carotovorum subsp. carotovorum (strain PC1).